A 911-amino-acid chain; its full sequence is DNA ligase 4 (911 aa).

Glu271, Thr272, Lys273, Leu274, Arg278, Glu331, Lys345, Phe367, Glu427, Lys432, Lys449, and Lys451 together coordinate ATP. Lys273 acts as the N6-AMP-lysine intermediate in catalysis. Glu331 contributes to the Mg(2+) binding site. Glu427 is a binding site for Mg(2+). A required for catalytic activity region spans residues 610–620; that stretch reads LASKHFYVGGD. BRCT domains follow at residues 654-743 and 808-911; these read KISN…PHFM and SPLS…QYLI.

This sequence belongs to the ATP-dependent DNA ligase family. Interacts with XRCC4; the LIG4-XRCC4 subcomplex has a 1:2 stoichiometry and XRCC4 is required for LIG4 stability. Component of the core long-range non-homologous end joining (NHEJ) complex (also named DNA-PK complex) composed of PRKDC, LIG4, XRCC4, XRCC6/Ku70, XRCC5/Ku86 and NHEJ1/XLF. Additional component of the NHEJ complex includes PAXX. Following autophosphorylation, PRKDC dissociates from DNA, leading to formation of the short-range NHEJ complex, composed of LIG4, XRCC4, XRCC6/Ku70, XRCC5/Ku86 and NHEJ1/XLF. Interacts with DCLRE1C; the interaction is direct. Interacts with APLF. Mg(2+) serves as cofactor.

The protein localises to the nucleus. It catalyses the reaction ATP + (deoxyribonucleotide)n-3'-hydroxyl + 5'-phospho-(deoxyribonucleotide)m = (deoxyribonucleotide)n+m + AMP + diphosphate.. Its function is as follows. DNA ligase involved in DNA non-homologous end joining (NHEJ); required for double-strand break (DSB) repair and V(D)J recombination. Catalyzes the NHEJ ligation step of the broken DNA during DSB repair by resealing the DNA breaks after the gap filling is completed. Joins single-strand breaks in a double-stranded polydeoxynucleotide in an ATP-dependent reaction. LIG4 is mechanistically flexible: it can ligate nicks as well as compatible DNA overhangs alone, while in the presence of XRCC4, it can ligate ends with 2-nucleotides (nt) microhomology and 1-nt gaps. Forms a subcomplex with XRCC4; the LIG4-XRCC4 subcomplex is responsible for the NHEJ ligation step and XRCC4 enhances the joining activity of LIG4. Binding of the LIG4-XRCC4 complex to DNA ends is dependent on the assembly of the DNA-dependent protein kinase complex DNA-PK to these DNA ends. LIG4 regulates nuclear localization of XRCC4. This Pongo abelii (Sumatran orangutan) protein is DNA ligase 4.